We begin with the raw amino-acid sequence, 521 residues long: MSRFLRGLTILWVVFRYGLDELVLSSFEHPWMRRARAVLTLGRRLDKPRGQRLREALEELGPIFVKFGQVLSTRSDLMPPDVAEELARLQDRVPPFDSQIAVDTIERAFRKKLDQIFVSFEREPVASASIAQVHFAVISDRNGVQRDVAVKVLRPGMKTVIDKDLALMHMMARWVERLSADGKRLKPRQVVAEFDNYLHDELDLIREASNAAQLRRNMEGLDLVLIPEVYWDFCRSDVMVMQRMTGVPISQVERLREAGVDIPKLARDGVTIFFTQVFRDGFFHADMHPGNIMVSLEPETFGRYISLDFGIVGTLTEYDKEYLAQNFTAFFRRDYKRVAELHIESGWVPPSTRVDELEAAIRAVCEPYFDRPLAEISLGMVLMRLFQTSRRFQVEIQPQLVLLQKTLLNIEGLGRQLDPNLDLWSTAKPFLEKWMLDQMGPQRLWRELLAEAPRYAKLIPELPRLIHRRLTRNSGEHDELLKELLQQQKLTNRLLQAIVSAGIGFVIALILLQLVVRLRWY.

Residues 119-497 (SFEREPVASA…QKLTNRLLQA (379 aa)) enclose the Protein kinase domain. Residues 125–133 (VASASIAQV) and K151 each bind ATP. The active-site Proton acceptor is the D286. The helical transmembrane segment at 496–516 (QAIVSAGIGFVIALILLQLVV) threads the bilayer.

The protein belongs to the ABC1 family. UbiB subfamily.

It is found in the cell inner membrane. Its pathway is cofactor biosynthesis; ubiquinone biosynthesis [regulation]. In terms of biological role, is probably a protein kinase regulator of UbiI activity which is involved in aerobic coenzyme Q (ubiquinone) biosynthesis. This Delftia acidovorans (strain DSM 14801 / SPH-1) protein is Probable protein kinase UbiB.